The primary structure comprises 499 residues: Basic immunoglobulin-like variable motif-containing protein (499 aa).

3 disordered regions span residues 1-29 (MPNI…RNNL), 153-172 (LKSR…ERKA), and 428-465 (GNLR…RSFS). Over residues 153–162 (LKSRSGVNKQ) the composition is skewed to polar residues. The span at 444–453 (PKSESEDNVS) shows a compositional bias: basic and acidic residues.

Belongs to the BIVM family.

The protein resides in the cytoplasm. It is found in the nucleus. The polypeptide is Basic immunoglobulin-like variable motif-containing protein (bivm) (Xenopus tropicalis (Western clawed frog)).